The primary structure comprises 410 residues: Probable inactive allantoicase (410 aa).

The protein belongs to the allantoicase family.

The function of this enzyme is unclear as allantoicase activity is not known to exist in mammals. In Macaca fascicularis (Crab-eating macaque), this protein is Probable inactive allantoicase (ALLC).